Consider the following 212-residue polypeptide: Protein-L-isoaspartate O-methyltransferase (212 aa).

The active site involves serine 60.

It belongs to the methyltransferase superfamily. L-isoaspartyl/D-aspartyl protein methyltransferase family.

Its subcellular location is the cytoplasm. It catalyses the reaction [protein]-L-isoaspartate + S-adenosyl-L-methionine = [protein]-L-isoaspartate alpha-methyl ester + S-adenosyl-L-homocysteine. Its function is as follows. Catalyzes the methyl esterification of L-isoaspartyl residues in peptides and proteins that result from spontaneous decomposition of normal L-aspartyl and L-asparaginyl residues. It plays a role in the repair and/or degradation of damaged proteins. The protein is Protein-L-isoaspartate O-methyltransferase of Methylorubrum populi (strain ATCC BAA-705 / NCIMB 13946 / BJ001) (Methylobacterium populi).